We begin with the raw amino-acid sequence, 540 residues long: Tyrosine-protein kinase transforming protein erbB (540 aa).

Residues 132 to 399 (FKKVKVLGFG…KMARDPPRYL (268 aa)) enclose the Protein kinase domain. ATP is bound by residues 138–146 (LGFGAFGTV) and lysine 165. The active-site Proton acceptor is aspartate 257.

Belongs to the protein kinase superfamily. Tyr protein kinase family. EGF receptor subfamily.

The enzyme catalyses L-tyrosyl-[protein] + ATP = O-phospho-L-tyrosyl-[protein] + ADP + H(+). In Avian erythroblastosis virus (strain ts167), this protein is Tyrosine-protein kinase transforming protein erbB (V-ERBB).